Reading from the N-terminus, the 559-residue chain is Protein pp71 (559 aa).

An S-nitrosocysteine; by host modification is found at Cys-218. Thr-223 is subject to Phosphothreonine. Disordered regions lie at residues 404–440 (EFLPQSPGLPPTEEEEEEEEEDDEDDLSSTPTPTPLS) and 530–559 (SSTLRSVPAPRPSPISTASTSSTPRSRPRI). The segment covering 415 to 430 (TEEEEEEEEEDDEDDL) has biased composition (acidic residues). 2 stretches are compositionally biased toward low complexity: residues 431–440 (SSTPTPTPLS) and 543–559 (PISTASTSSTPRSRPRI).

Belongs to the herpesviridae pp71 family. In terms of assembly, interacts with the host protein DAXX; this interaction takes place at ND10 and induces the reversal of DAXX-mediated repression of viral transcription. Interacts with UL35. Interacts with host TMEM173/STING1; this interaction inhibits the cGAS/STING pathway. Interacts with host RB1; this interaction mediates RB1 proteasomal degradation. Post-translationally, S-nitrosylation limits ability to undermine the cGAS/STING antiviral pathway.

The protein localises to the virion tegument. Its subcellular location is the host nucleus. It is found in the host endoplasmic reticulum. Stimulates viral immediate-early (IE) transcription. Plays a role in the inhibition of the host innate repsonse by targeting STING1 and thus the cGAS-STING pathway. Also counteracts host DAXX-mediated repression of viral transcription. Displaces a DAXX-binding protein, ATRX, from nuclear domain 10 sites (ND10) shortly after infection. Increases the basal level of SUMOylated DAXX in infected cells. Stimulates quiescent cells to re-enter the cell cycle, proceed through G1 and enter the S phase. Interacts with hypophosphorylated forms of RB1 and induces their degradation by the proteasome without involving ubiquitin conjugation. The chain is Protein pp71 (UL82) from Homo sapiens (Human).